Consider the following 252-residue polypeptide: 2-succinyl-6-hydroxy-2,4-cyclohexadiene-1-carboxylate synthase (252 aa).

It belongs to the AB hydrolase superfamily. MenH family. As to quaternary structure, monomer.

It carries out the reaction 5-enolpyruvoyl-6-hydroxy-2-succinyl-cyclohex-3-ene-1-carboxylate = (1R,6R)-6-hydroxy-2-succinyl-cyclohexa-2,4-diene-1-carboxylate + pyruvate. Its pathway is quinol/quinone metabolism; 1,4-dihydroxy-2-naphthoate biosynthesis; 1,4-dihydroxy-2-naphthoate from chorismate: step 3/7. It participates in quinol/quinone metabolism; menaquinone biosynthesis. In terms of biological role, catalyzes a proton abstraction reaction that results in 2,5-elimination of pyruvate from 2-succinyl-5-enolpyruvyl-6-hydroxy-3-cyclohexene-1-carboxylate (SEPHCHC) and the formation of 2-succinyl-6-hydroxy-2,4-cyclohexadiene-1-carboxylate (SHCHC). The sequence is that of 2-succinyl-6-hydroxy-2,4-cyclohexadiene-1-carboxylate synthase from Escherichia coli O17:K52:H18 (strain UMN026 / ExPEC).